The following is a 416-amino-acid chain: Antigen EG13 (416 aa).

The F-BAR domain occupies 1–247 (MIQERADIEK…TVAKVDADAD (247 aa)). The interval 297–327 (LKTFTSPDRGGPIPGTTDSGSNISTSPVHTT) is disordered. The span at 312 to 327 (TTDSGSNISTSPVHTT) shows a compositional bias: polar residues. The SH3 domain occupies 361-416 (RPGVPIRALYDYVGVEADELSFNSGDLFEKLEDEDEQGWCKGRKDGRVGLYPRQLR).

The protein is Antigen EG13 (EG13) of Echinococcus granulosus (Hydatid tapeworm).